The chain runs to 106 residues: Large ribosomal subunit protein bL21 (106 aa).

The protein belongs to the bacterial ribosomal protein bL21 family. Part of the 50S ribosomal subunit. Contacts protein L20.

In terms of biological role, this protein binds to 23S rRNA in the presence of protein L20. In Xylella fastidiosa (strain Temecula1 / ATCC 700964), this protein is Large ribosomal subunit protein bL21.